We begin with the raw amino-acid sequence, 254 residues long: Winged helix repair factor 1 (254 aa).

The short motif at 4-21 (KRRLLASEAFGVKRRRAP) is the Bipartite nuclear localization signal element. Winged helix domain regions lie at residues 32–104 (RAGS…GIVF), 120–179 (PCAG…LAVP), and 180–254 (GAGR…LPDT).

It belongs to the STK19 family. As to quaternary structure, monomer in solution. Homodimer; when bound to DNA. Component of a transcription-coupled nucleotide excision repair (TC-NER) complex composed of STK19, ERCC6, ERCC8, DDA1, DDB1, ELOF1 and UVSSA which assembles and interacts with the multiprotein RNA polymerase II complex when it stalls at DNA lesions.

The protein localises to the nucleus. DNA-binding protein which is required for efficient transcription-coupled nucleotide excision repair (TC-NER). Acts as part of a TC-NER complex which assembles and interacts with RNA polymerase II (RNAPII) when it stalls at DNA lesions. TC-NER complex subunit UVSSA binds to the GTF2H1/p62 subunit of the TFIIH transcription factor complex, tethering TFIIH to the TC-NER complex. WHR1/STK19 then interacts with the XPD helicase subunit of TFIIH which guides TFIIH to DNA downstream of the stalled RNAPII, ensuring DNA repair. Directly interacts with RNAPII and also binds to downstream DNA. Promotes the timely removal of DNA damage-stalled RNAPII, allowing downstream NER factors to access DNA lesions. Required for monoubiquitination of UVSSA. Regulates repositioning and stabilization of UVSSA within the TC-NER complex. Stimulates ubiquitination of RNAPII complex member RBP1. Also binds to RNA and regulates the expression levels of many mRNAs. The sequence is that of Winged helix repair factor 1 from Mus musculus (Mouse).